The sequence spans 315 residues: tRNA dimethylallyltransferase (315 aa).

Residue 10–17 (GPTAVGKT) participates in ATP binding. Residue 12 to 17 (TAVGKT) coordinates substrate. An interaction with substrate tRNA region spans residues 35–38 (DSMQ).

The protein belongs to the IPP transferase family. As to quaternary structure, monomer. Mg(2+) serves as cofactor.

It catalyses the reaction adenosine(37) in tRNA + dimethylallyl diphosphate = N(6)-dimethylallyladenosine(37) in tRNA + diphosphate. In terms of biological role, catalyzes the transfer of a dimethylallyl group onto the adenine at position 37 in tRNAs that read codons beginning with uridine, leading to the formation of N6-(dimethylallyl)adenosine (i(6)A). This Geobacillus kaustophilus (strain HTA426) protein is tRNA dimethylallyltransferase.